A 65-amino-acid polypeptide reads, in one-letter code: ATP synthase F(0) complex subunit 8 (65 aa).

Residues 8 to 24 (TWLTTILSMFLALFIIF) traverse the membrane as a helical segment. Lysine 53 carries the N6-acetyllysine; alternate modification. The residue at position 53 (lysine 53) is an N6-succinyllysine; alternate. Lysine 56 is subject to N6-acetyllysine.

The protein belongs to the ATPase protein 8 family. Component of the ATP synthase complex composed at least of ATP5F1A/subunit alpha, ATP5F1B/subunit beta, ATP5MC1/subunit c (homooctomer), MT-ATP6/subunit a, MT-ATP8/subunit 8, ATP5ME/subunit e, ATP5MF/subunit f, ATP5MG/subunit g, ATP5MK/subunit k, ATP5MJ/subunit j, ATP5F1C/subunit gamma, ATP5F1D/subunit delta, ATP5F1E/subunit epsilon, ATP5PF/subunit F6, ATP5PB/subunit b, ATP5PD/subunit d, ATP5PO/subunit OSCP. ATP synthase complex consists of a soluble F(1) head domain (subunits alpha(3) and beta(3)) - the catalytic core - and a membrane F(0) domain - the membrane proton channel (subunits c, a, 8, e, f, g, k and j). These two domains are linked by a central stalk (subunits gamma, delta, and epsilon) rotating inside the F1 region and a stationary peripheral stalk (subunits F6, b, d, and OSCP). Interacts with PRICKLE3.

The protein localises to the mitochondrion membrane. In terms of biological role, subunit 8, of the mitochondrial membrane ATP synthase complex (F(1)F(0) ATP synthase or Complex V) that produces ATP from ADP in the presence of a proton gradient across the membrane which is generated by electron transport complexes of the respiratory chain. ATP synthase complex consist of a soluble F(1) head domain - the catalytic core - and a membrane F(1) domain - the membrane proton channel. These two domains are linked by a central stalk rotating inside the F(1) region and a stationary peripheral stalk. During catalysis, ATP synthesis in the catalytic domain of F(1) is coupled via a rotary mechanism of the central stalk subunits to proton translocation. In vivo, can only synthesize ATP although its ATP hydrolase activity can be activated artificially in vitro. Part of the complex F(0) domain. In Capra ibex ibex (Alpine ibex), this protein is ATP synthase F(0) complex subunit 8.